The sequence spans 192 residues: MSLFAIIYMLFTYLLGSISSDVVICRFTERNDARVTNSNVLQKGEYRLVLVVFLCDVLKGMLPVWVGYYLGLTYFELGMVALAACLGHIFPIFFKFSGGKGVATAFGAIAPIAWGVAGSMLGTWLLIFLFSGYVALSTVVTALILPFYVWWFKPEFTFPVALVCCLLVYRHHENIQRLWRGQEDKIWSKFKK.

5 helical membrane passes run F4 to I24, L48 to Y68, Y74 to F94, G101 to L121, and L125 to L145.

The protein belongs to the PlsY family. As to quaternary structure, probably interacts with PlsX.

The protein resides in the cell inner membrane. It catalyses the reaction an acyl phosphate + sn-glycerol 3-phosphate = a 1-acyl-sn-glycero-3-phosphate + phosphate. It functions in the pathway lipid metabolism; phospholipid metabolism. Catalyzes the transfer of an acyl group from acyl-phosphate (acyl-PO(4)) to glycerol-3-phosphate (G3P) to form lysophosphatidic acid (LPA). This enzyme utilizes acyl-phosphate as fatty acyl donor, but not acyl-CoA or acyl-ACP. The sequence is that of Glycerol-3-phosphate acyltransferase from Histophilus somni (strain 129Pt) (Haemophilus somnus).